Reading from the N-terminus, the 148-residue chain is Small ribosomal subunit protein uS7c (148 aa).

It belongs to the universal ribosomal protein uS7 family. In terms of assembly, part of the 30S ribosomal subunit.

The protein resides in the plastid. Its subcellular location is the chloroplast. Its function is as follows. One of the primary rRNA binding proteins, it binds directly to 16S rRNA where it nucleates assembly of the head domain of the 30S subunit. The protein is Small ribosomal subunit protein uS7c (rps7) of Cyanidioschyzon merolae (strain NIES-3377 / 10D) (Unicellular red alga).